Consider the following 311-residue polypeptide: Reaction center protein L chain (311 aa).

A run of 3 helical transmembrane segments spans residues phenylalanine 68–leucine 90, glycine 123–leucine 151, and histidine 156–alanine 178. The (7R,8Z)-bacteriochlorophyll b site is built by histidine 183 and histidine 213. A helical membrane pass occupies residues proline 211–alanine 238. Histidine 230 is a binding site for Fe cation. Phenylalanine 253 is a binding site for a ubiquinone. Residues glycine 262–leucine 287 traverse the membrane as a helical segment. Histidine 267 provides a ligand contact to Fe cation.

It belongs to the reaction center PufL/M/PsbA/D family. Reaction center is composed of four bacteriochlorophylls, two bacteriopheophytins, two ubiquinones, one iron, and two highly hydrophobic polypeptide chains (designated L and M).

The protein localises to the cell membrane. Functionally, the reaction center is a membrane-bound complex that mediates the initial photochemical event in the electron transfer process of photosynthesis. The chain is Reaction center protein L chain (pufL) from Chloroflexus aurantiacus (strain ATCC 29366 / DSM 635 / J-10-fl).